The primary structure comprises 66 residues: MKATELQKFTDEELKQMLDDLKRKLMDLRFQLEMNKLTNTSQIKFVKRDIARIKTILRGRELGVRR.

It belongs to the universal ribosomal protein uL29 family.

This Kosmotoga olearia (strain ATCC BAA-1733 / DSM 21960 / TBF 19.5.1) protein is Large ribosomal subunit protein uL29.